The following is a 453-amino-acid chain: Chromosomal replication initiator protein DnaA (453 aa).

Residues 1–73 (MSKEEIWDKV…ADLIEKAIGT (73 aa)) are domain I, interacts with DnaA modulators. A domain II region spans residues 73-114 (TKLMPNFVIQEDLTEDKQVKDSAKAKSEAKPDVQAPQNSSED). Positions 91-103 (VKDSAKAKSEAKP) are enriched in basic and acidic residues. The interval 91–113 (VKDSAKAKSEAKPDVQAPQNSSE) is disordered. The segment at 115-331 (QFNVHNTFET…GALTRVIAYS (217 aa)) is domain III, AAA+ region. Residues Gly159, Gly161, Lys162, and Thr163 each contribute to the ATP site. Residues 332-453 (RLQNEAITTE…ENLEKEIRNQ (122 aa)) form a domain IV, binds dsDNA region.

Belongs to the DnaA family. Oligomerizes as a right-handed, spiral filament on DNA at oriC.

The protein localises to the cytoplasm. In terms of biological role, plays an essential role in the initiation and regulation of chromosomal replication. ATP-DnaA binds to the origin of replication (oriC) to initiate formation of the DNA replication initiation complex once per cell cycle. Binds the DnaA box (a 9 base pair repeat at the origin) and separates the double-stranded (ds)DNA. Forms a right-handed helical filament on oriC DNA; dsDNA binds to the exterior of the filament while single-stranded (ss)DNA is stabiized in the filament's interior. The ATP-DnaA-oriC complex binds and stabilizes one strand of the AT-rich DNA unwinding element (DUE), permitting loading of DNA polymerase. After initiation quickly degrades to an ADP-DnaA complex that is not apt for DNA replication. Binds acidic phospholipids. The polypeptide is Chromosomal replication initiator protein DnaA (Staphylococcus carnosus (strain TM300)).